The chain runs to 118 residues: Pterin-4-alpha-carbinolamine dehydratase (118 aa).

Belongs to the pterin-4-alpha-carbinolamine dehydratase family.

It catalyses the reaction (4aS,6R)-4a-hydroxy-L-erythro-5,6,7,8-tetrahydrobiopterin = (6R)-L-erythro-6,7-dihydrobiopterin + H2O. Involved in tetrahydrobiopterin biosynthesis. Seems to both prevent the formation of 7-pterins and accelerate the formation of quinonoid-BH2. May also have a positive regulatory role in the expression of phhA. In Pseudomonas syringae pv. tomato (strain ATCC BAA-871 / DC3000), this protein is Pterin-4-alpha-carbinolamine dehydratase (phhB).